Consider the following 71-residue polypeptide: Vitellogenin-B1 (71 aa).

The signal sequence occupies residues 1–15 (MRGIILAQLLALAGS). The region spanning 24–71 (FSESKPYVYNYEGIILNGIPENGLARSGIKLNCKAEISGYAQRSYMLK) is the Vitellogenin domain.

As to expression, produced by the liver, secreted into the blood and then sequestered by receptor mediated endocytosis into growing oocytes, where it is generally cleaved, giving rise to the respective yolk components.

Functionally, precursor of the major egg-yolk proteins that are sources of nutrients during early development of oviparous organisms. The polypeptide is Vitellogenin-B1 (Xenopus laevis (African clawed frog)).